The chain runs to 568 residues: Nitrite reductase (568 aa).

A signal peptide spans 1 to 25 (MPFGKPLVGTLLASLTLLGLATAHA). Positions 26–54 (KDDMKAAEQYQGAASAVDPAHVVRTNGAP) are N-terminal tail. The 86-residue stretch at 55-140 (DMSESEFNEA…AKYIQHTPPQ (86 aa)) folds into the Cytochrome c domain. Heme c is bound by residues Cys72, Cys75, His76, Arg96, Thr109, and Met113. The D1-heme domain stretch occupies residues 141–568 (PPEWGMPEMR…NVYNTQHDVY (428 aa)). Heme d1-binding residues include His207, Arg250, Ser251, Tyr270, Arg397, and Gln508.

In terms of assembly, homodimer. Heme c is required as a cofactor. The cofactor is heme.

The protein resides in the periplasm. It carries out the reaction nitric oxide + Fe(III)-[cytochrome c] + H2O = Fe(II)-[cytochrome c] + nitrite + 2 H(+). It catalyses the reaction A + NH4(+) + H2O = hydroxylamine + AH2 + H(+). The chain is Nitrite reductase (nirS) from Pseudomonas aeruginosa (strain ATCC 15692 / DSM 22644 / CIP 104116 / JCM 14847 / LMG 12228 / 1C / PRS 101 / PAO1).